A 626-amino-acid polypeptide reads, in one-letter code: MGPEAWVRPLKTAPKPGEAIRLILFIYLSCFFLPVMSSEPSYSFLLTSFTTGRVFANTTWRAGTSKEVSFAVDLCVLFPEPARTHEEQHNLPVIGAGSVDLAAGFGHSGSQTGCGSSKGAEKGLQNVDFYLCPGNHPDASCRDTYQFFCPDWTCVTLATYSGGSTRSSTLSISRVPHPKLCTRKNCNPLTITVHDPNAAQWYYGMSWGLRLYIPGFDVGTMFTIQKKILVSWSSPKPIGPLTDLGDPIFQKHPDKVDLTVPLPFLVPRPQLQQQHLQPSLMSILGGVHHLLNLTQPKLAQDCWLCLKAKPPYYVGLGVEATLKRGPLSCHTRPRALTIGDVSGNASCLISTGYNLSASPFQATCNQSLLTSISTSVSYQAPNNTWLACTSGLTRCINGTEPGPLLCVLVHVLPQVYVYSGPEGRQLIAPPELHPRLHQAVPLLVPLLAGLSIAGSAAIGTAALVQGETGLISLSQQVDADFSNLQSAIDILHSQVESLAEVVLQNCRCLDLLFLSQGGLCAALGESCCFYANQSGVIKGTVKKVRENLDRHQQERENNIPWYQSMFNWNPWLTTLITGLAGPLLILLLSLIFGPCILNSFLNFIKQRIASVKLTYLKTQYDTLVNN.

Positions 1–38 (MGPEAWVRPLKTAPKPGEAIRLILFIYLSCFFLPVMSS) are cleaved as a signal peptide. Residues 39-438 (EPSYSFLLTS…PPELHPRLHQ (400 aa)) form a surface protein region. Over 39–575 (EPSYSFLLTS…FNWNPWLTTL (537 aa)) the chain is Extracellular. The CXXC motif lies at 302–305 (CWLC). The fusion peptide stretch occupies residues 439-459 (AVPLLVPLLAGLSIAGSAAIG). The interval 439–626 (AVPLLVPLLA…KTQYDTLVNN (188 aa)) is transmembrane protein. The short motif at 503-519 (LQNCRCLDLLFLSQGGL) is the CKS-17 element. An intrachain disulfide couples Cys520 to Cys527. The CX6CC signature appears at 520 to 528 (CAALGESCC). A helical membrane pass occupies residues 576–596 (ITGLAGPLLILLLSLIFGPCI). The Cytoplasmic portion of the chain corresponds to 597-626 (LNSFLNFIKQRIASVKLTYLKTQYDTLVNN).

Belongs to the gamma type-C retroviral envelope protein family. HERV class-I T env subfamily. Post-translationally, the CXXC motif is highly conserved across a broad range of retroviral envelope proteins. It is thought to participate in the formation of a labile disulfide bond possibly with the CX6CC motif present in the transmembrane domain. Expressed at higher level in thyroid. Expressed at lower level in adrenal, bone marrow, brain, breast, kidney, ovary, placenta, prostate, skin, testis and trachea.

It localises to the cell membrane. Functionally, retroviral envelope proteins mediate receptor recognition and membrane fusion during early infection. Endogenous envelope proteins may have kept, lost or modified their original function during evolution. This endogenous envelope protein has lost its original fusogenic properties. This Homo sapiens (Human) protein is Endogenous retrovirus group S71 member 1 Env polyprotein (ERVS71-1).